The primary structure comprises 434 residues: Trigger factor (434 aa).

Residues 160–245 enclose the PPIase FKBP-type domain; that stretch reads GDKVKMNFVG…LTEVQAANLP (86 aa).

It belongs to the FKBP-type PPIase family. Tig subfamily.

The protein resides in the cytoplasm. The catalysed reaction is [protein]-peptidylproline (omega=180) = [protein]-peptidylproline (omega=0). In terms of biological role, involved in protein export. Acts as a chaperone by maintaining the newly synthesized protein in an open conformation. Functions as a peptidyl-prolyl cis-trans isomerase. This chain is Trigger factor, found in Shewanella putrefaciens (strain CN-32 / ATCC BAA-453).